The following is a 302-amino-acid chain: uncharacterized protein (302 aa).

A run of 10 helical transmembrane segments spans residues 13–32 (GILLAISAYTMWGIAPIYFK), 42–64 (ILSHRVVWSFVLLAVLIHLGRRW), 77–96 (FWLLLVTALLVGGNWLIFIW), 106–125 (ASLGYYINPLLNVLLGMLFL), 132–150 (LQWFAVALAAIGVGIQLVV), 154–171 (VPIVAIALATSFGFYGLL), 183–202 (LFLETLFMLPAAAIYLIWLA), 217–239 (NLLLVCAGVVTTLPLLCFTGAAA), 246–265 (LGFFQYIGPSLMFLLAVLVY), and 275–297 (ITFAFIWSALVIFSVDGLKAGHA). Residues 22–149 (TMWGIAPIYF…AAIGVGIQLV (128 aa)) form the EamA domain.

The protein belongs to the EamA transporter family.

The protein resides in the cell membrane. This is an uncharacterized protein from Vibrio cholerae serotype O1 (strain ATCC 39315 / El Tor Inaba N16961).